Reading from the N-terminus, the 484-residue chain is Probable receptor-like protein kinase At5g18500 (484 aa).

Residues 21–41 (IIVIVLSAIFVVVLAISLWLT) form a helical membrane-spanning segment. Positions 72–135 (RVDEVSSSNG…SVSSANPLTA (64 aa)) are disordered. Basic and acidic residues predominate over residues 91 to 105 (KFGDKEPEKGIKAES). The span at 125–134 (SSVSSANPLT) shows a compositional bias: polar residues. At T155 the chain carries Phosphothreonine. The 280-residue stretch at 166 to 445 (FSRDNIIGDG…MLESEEYPIA (280 aa)) folds into the Protein kinase domain. Residues 172–180 (IGDGGYGVV) and K194 each bind ATP. Y239 is modified (phosphotyrosine). D292 (proton acceptor) is an active-site residue. S296 is subject to Phosphoserine. T326 and T331 each carry phosphothreonine. Y339 bears the Phosphotyrosine mark. The disordered stretch occupies residues 425-484 (EKRPRMSQVARMLESEEYPIAREDRRRRRSQNGTTRDSDPPRNSTDTDKSEYHDLKPEGG). The segment covering 460 to 484 (RDSDPPRNSTDTDKSEYHDLKPEGG) has biased composition (basic and acidic residues).

It belongs to the protein kinase superfamily. Ser/Thr protein kinase family.

It localises to the cell membrane. It carries out the reaction L-seryl-[protein] + ATP = O-phospho-L-seryl-[protein] + ADP + H(+). The catalysed reaction is L-threonyl-[protein] + ATP = O-phospho-L-threonyl-[protein] + ADP + H(+). The sequence is that of Probable receptor-like protein kinase At5g18500 from Arabidopsis thaliana (Mouse-ear cress).